We begin with the raw amino-acid sequence, 166 residues long: ATP synthase subunit b (166 aa).

A helical membrane pass occupies residues 7–27 (QFSLGLFILQIILFVGLILLL).

It belongs to the ATPase B chain family. In terms of assembly, F-type ATPases have 2 components, F(1) - the catalytic core - and F(0) - the membrane proton channel. F(1) has five subunits: alpha(3), beta(3), gamma(1), delta(1), epsilon(1). F(0) has three main subunits: a(1), b(2) and c(10-14). The alpha and beta chains form an alternating ring which encloses part of the gamma chain. F(1) is attached to F(0) by a central stalk formed by the gamma and epsilon chains, while a peripheral stalk is formed by the delta and b chains.

It localises to the cell inner membrane. In terms of biological role, f(1)F(0) ATP synthase produces ATP from ADP in the presence of a proton or sodium gradient. F-type ATPases consist of two structural domains, F(1) containing the extramembraneous catalytic core and F(0) containing the membrane proton channel, linked together by a central stalk and a peripheral stalk. During catalysis, ATP synthesis in the catalytic domain of F(1) is coupled via a rotary mechanism of the central stalk subunits to proton translocation. Functionally, component of the F(0) channel, it forms part of the peripheral stalk, linking F(1) to F(0). The chain is ATP synthase subunit b from Flavobacterium psychrophilum (strain ATCC 49511 / DSM 21280 / CIP 103535 / JIP02/86).